Consider the following 1155-residue polypeptide: DNA-directed RNA polymerase subunit beta (1155 aa).

It belongs to the RNA polymerase beta chain family. The RNAP catalytic core consists of 2 alpha, 1 beta, 1 beta' and 1 omega subunit. When a sigma factor is associated with the core the holoenzyme is formed, which can initiate transcription.

It catalyses the reaction RNA(n) + a ribonucleoside 5'-triphosphate = RNA(n+1) + diphosphate. Its function is as follows. DNA-dependent RNA polymerase catalyzes the transcription of DNA into RNA using the four ribonucleoside triphosphates as substrates. The polypeptide is DNA-directed RNA polymerase subunit beta (Borreliella afzelii (strain PKo) (Borrelia afzelii)).